The primary structure comprises 189 residues: Phosphoheptose isomerase (189 aa).

An SIS domain is found at 34–189 (LVDALGNGKK…CDLLEKRLFG (156 aa)). 49-51 (NGG) provides a ligand contact to substrate. Zn(2+)-binding residues include His-58 and Glu-62. Substrate contacts are provided by residues Glu-62, 91 to 92 (ND), 117 to 119 (STS), Ser-122, and Gln-169. Zn(2+) is bound by residues Gln-169 and His-177.

The protein belongs to the SIS family. GmhA subfamily. As to quaternary structure, homotetramer. It depends on Zn(2+) as a cofactor.

It localises to the cytoplasm. The catalysed reaction is 2 D-sedoheptulose 7-phosphate = D-glycero-alpha-D-manno-heptose 7-phosphate + D-glycero-beta-D-manno-heptose 7-phosphate. The protein operates within carbohydrate biosynthesis; D-glycero-D-manno-heptose 7-phosphate biosynthesis; D-glycero-alpha-D-manno-heptose 7-phosphate and D-glycero-beta-D-manno-heptose 7-phosphate from sedoheptulose 7-phosphate: step 1/1. Its function is as follows. Catalyzes the isomerization of sedoheptulose 7-phosphate in D-glycero-D-manno-heptose 7-phosphate. This Geotalea uraniireducens (strain Rf4) (Geobacter uraniireducens) protein is Phosphoheptose isomerase.